The following is a 56-amino-acid chain: Small integral membrane protein 39 (56 aa).

A helical transmembrane segment spans residues Val-33–Leu-53.

The protein localises to the membrane. The chain is Small integral membrane protein 39 from Homo sapiens (Human).